A 342-amino-acid chain; its full sequence is N-acetyl-gamma-glutamyl-phosphate reductase (342 aa).

Residue cysteine 146 is part of the active site.

It belongs to the NAGSA dehydrogenase family. Type 1 subfamily.

It is found in the cytoplasm. The catalysed reaction is N-acetyl-L-glutamate 5-semialdehyde + phosphate + NADP(+) = N-acetyl-L-glutamyl 5-phosphate + NADPH + H(+). Its pathway is amino-acid biosynthesis; L-arginine biosynthesis; N(2)-acetyl-L-ornithine from L-glutamate: step 3/4. In terms of biological role, catalyzes the NADPH-dependent reduction of N-acetyl-5-glutamyl phosphate to yield N-acetyl-L-glutamate 5-semialdehyde. The sequence is that of N-acetyl-gamma-glutamyl-phosphate reductase from Thermobifida fusca (strain YX).